Reading from the N-terminus, the 320-residue chain is Foldase protein PrsA (320 aa).

The N-terminal stretch at 1–20 (MKMINKLIVPVTASALLLGA) is a signal peptide. Residue cysteine 21 is the site of N-palmitoyl cysteine attachment. Residue cysteine 21 is the site of S-diacylglycerol cysteine attachment. One can recognise a PpiC domain in the interval 139–245 (EDSKKASHIL…FGYHIIKADK (107 aa)). The interval 159–198 (EGLDDKEAKQKAEEIQKEVSKDPSKFGEIAKKESMDTGSA) is disordered.

This sequence belongs to the PrsA family.

Its subcellular location is the cell membrane. The enzyme catalyses [protein]-peptidylproline (omega=180) = [protein]-peptidylproline (omega=0). Its function is as follows. Plays a major role in protein secretion by helping the post-translocational extracellular folding of several secreted proteins. The protein is Foldase protein PrsA of Staphylococcus aureus (strain Mu3 / ATCC 700698).